The primary structure comprises 431 residues: Adenylosuccinate synthetase (431 aa).

Residues 12 to 18 (GDEGKGK) and 40 to 42 (GHT) contribute to the GTP site. The active-site Proton acceptor is the aspartate 13. Mg(2+)-binding residues include aspartate 13 and glycine 40. Residues 13-16 (DEGK), 38-41 (NAGH), threonine 130, arginine 144, glutamine 225, threonine 240, and arginine 304 each bind IMP. Histidine 41 acts as the Proton donor in catalysis. 300–306 (ATTGRPR) contacts substrate. Residues arginine 306, 332–334 (KLD), and 414–416 (SVG) contribute to the GTP site.

The protein belongs to the adenylosuccinate synthetase family. As to quaternary structure, homodimer. Mg(2+) serves as cofactor.

It localises to the cytoplasm. It carries out the reaction IMP + L-aspartate + GTP = N(6)-(1,2-dicarboxyethyl)-AMP + GDP + phosphate + 2 H(+). Its pathway is purine metabolism; AMP biosynthesis via de novo pathway; AMP from IMP: step 1/2. Functionally, plays an important role in the de novo pathway of purine nucleotide biosynthesis. Catalyzes the first committed step in the biosynthesis of AMP from IMP. This Geotalea uraniireducens (strain Rf4) (Geobacter uraniireducens) protein is Adenylosuccinate synthetase.